We begin with the raw amino-acid sequence, 168 residues long: MKVEIGKIVNTHGIKGEIKVKSNSDFTETRFQPGELVIIERKNKEPLEFTIASYRMHKGLHMLTFEGINNINDIEYLKGETIMQERDHEEIELGEHEFYYSDIIGCTVFDDDDTPIGRVTEIFETGANDVWVVKGDKEYLIPYIADVVKDIDVEGRRIQITPMEGLLD.

The PRC barrel domain maps to 95–166 (EHEFYYSDII…RIQITPMEGL (72 aa)).

It belongs to the RimM family. Binds ribosomal protein uS19.

Its subcellular location is the cytoplasm. Functionally, an accessory protein needed during the final step in the assembly of 30S ribosomal subunit, possibly for assembly of the head region. Essential for efficient processing of 16S rRNA. May be needed both before and after RbfA during the maturation of 16S rRNA. It has affinity for free ribosomal 30S subunits but not for 70S ribosomes. This is Ribosome maturation factor RimM from Staphylococcus saprophyticus subsp. saprophyticus (strain ATCC 15305 / DSM 20229 / NCIMB 8711 / NCTC 7292 / S-41).